A 274-amino-acid chain; its full sequence is HTH-type transcriptional regulator GadX (274 aa).

The region spanning 145–242 (TRVCTVINNN…GMTPTEYQER (98 aa)) is the HTH araC/xylS-type domain. 2 consecutive DNA-binding regions (H-T-H motif) follow at residues 162-183 (ARIA…REEG) and 209-232 (IKRV…RNYY).

In terms of assembly, homodimer.

Positively regulates the expression of about fifteen genes involved in acid resistance such as gadA, gadB and gadC. Depending on the conditions (growth phase and medium), can repress gadW. The chain is HTH-type transcriptional regulator GadX (gadX) from Escherichia coli O6:H1 (strain CFT073 / ATCC 700928 / UPEC).